Here is an 829-residue protein sequence, read N- to C-terminus: Ent-cassa-12,15-diene synthase (829 aa).

The segment at 1–50 (MMLLGSPSSGGYGGKFAGASPAGGTTTMAPSAKQPSSRAPPPGITGGRND) is disordered. Over residues 23–37 (GGTTTMAPSAKQPSS) the composition is skewed to polar residues. Positions 576, 580, 720, and 728 each coordinate Mg(2+). A DDXXD motif motif is present at residues 576-580 (DDLFD).

Belongs to the terpene synthase family. Mg(2+) is required as a cofactor. Expressed in roots and stems.

It carries out the reaction ent-copalyl diphosphate = ent-cassa-12,15-diene + diphosphate. Functionally, involved in phytocassane phytoalexins biosynthesis. Catalyzes the conversion of ent-copalyl diphosphate to the phytoalexin precursor ent-cassa-12,15-diene. In Oryza sativa subsp. japonica (Rice), this protein is Ent-cassa-12,15-diene synthase (KSL7).